We begin with the raw amino-acid sequence, 109 residues long: 12 kDa heat shock protein (109 aa).

Over residues 1–21 (MSDAGRKGFGEKASEALKPDS) the composition is skewed to basic and acidic residues. Residues 1-82 (MSDAGRKGFG…SLADQARDYM (82 aa)) form a disordered region. Serine 21 is modified (phosphoserine; by ATM or ATR). Serine 24 is modified (phosphoserine). Basic and acidic residues-rich tracts occupy residues 28–50 (QGKE…EDNK) and 58–67 (DSAEKGKDNA). Serine 59, serine 73, and serine 97 each carry phosphoserine.

This sequence to S.pombe hsp9 and C.albicans WH11.

In terms of biological role, may play a role in a switch from carbohydrate utilizing metabolism to fatty acid utilizing metabolism. The protein is 12 kDa heat shock protein (HSP12) of Saccharomyces cerevisiae (strain ATCC 204508 / S288c) (Baker's yeast).